Consider the following 198-residue polypeptide: Phosphoheptose isomerase (198 aa).

The region spanning 40-198 (IIGALRGGHK…IEAALMQDAR (159 aa)) is the SIS domain. Substrate is bound at residue 55 to 57 (NGG). Residues His64 and Glu68 each contribute to the Zn(2+) site. Residues Glu68, 97–98 (ND), 123–125 (STS), Ser128, and Gln175 each bind substrate. Zn(2+) contacts are provided by Gln175 and His183.

The protein belongs to the SIS family. GmhA subfamily. As to quaternary structure, homotetramer. Zn(2+) is required as a cofactor.

It localises to the cytoplasm. It carries out the reaction 2 D-sedoheptulose 7-phosphate = D-glycero-alpha-D-manno-heptose 7-phosphate + D-glycero-beta-D-manno-heptose 7-phosphate. It functions in the pathway carbohydrate biosynthesis; D-glycero-D-manno-heptose 7-phosphate biosynthesis; D-glycero-alpha-D-manno-heptose 7-phosphate and D-glycero-beta-D-manno-heptose 7-phosphate from sedoheptulose 7-phosphate: step 1/1. Catalyzes the isomerization of sedoheptulose 7-phosphate in D-glycero-D-manno-heptose 7-phosphate. The protein is Phosphoheptose isomerase of Bradyrhizobium sp. (strain ORS 278).